Here is a 426-residue protein sequence, read N- to C-terminus: MTSSADLTNLKELLSLYKSLKFSDSAAIEKYNSLVEWGTSTYWKIGVQKVANVETSISDYYDEVKNKPFNIDPGYYIFLPVYFGSVFIYSKGKNMVELGSGNSFQIPDDMRSACNKVLDSDNGIDFLRFVLLNNRWIMEDAISKYQSPVNIFKLASEYGLNIPKYLEIEIEEDTLFDDELYSIIERSFDDKFPKISISYIKLGELRRQVVDFFKFSFMYIESIKVDRIGDNIFIPSVITKSGKKILVKDVDHLIRSKVREHTFVKVKKKNTFSILYDYDGNGTETRGEVIKRIIDTIGRDYYVNGKYFSKVGSAGLKQLTNKLDINECATVDELVDEINKSGTVKRKIKNQSAFDLSRECLGYPEADFITLVNNMRFKIENCKVVNFNIENTNCLNNPSIETIYGNFNQFVSIFNIVTDVKKRLFE.

This sequence belongs to the poxviruses A20 family. Interacts with the DNA polymerase catalytic subunit E9. Interacts with UDG. Component of the Uracil-DNA glycosylase(UDG)-A20-polymerase complex; A20 and UDG form a heterodimeric processivity factor that associates with E9 to form the processive polymerase holoenzyme. Interacts with D5.

Functionally, plays an essential role in viral DNA replication by acting as the polymerase processivity factor together with protein D4. May serve as a bridge which links the DNA polymerase E9 and the uracil DNA glycosylase. This Vaccinia virus (strain Ankara) (VACV) protein is DNA polymerase processivity factor component A20.